Here is an 887-residue protein sequence, read N- to C-terminus: Fibroblast growth factor receptor 2 (887 aa).

The signal sequence occupies residues Met-1–Ala-18. At Gln-19–Thr-416 the chain is on the extracellular side. Ig-like C2-type domains are found at residues Asn-22–Ser-115 and Val-180–Lys-260. 9 N-linked (GlcNAc...) asparagine glycosylation sites follow: Asn-28, Asn-74, Asn-93, Asn-230, Asn-261, Asn-268, Asn-328, Asn-334, and Asn-364. An intrachain disulfide couples Cys-43 to Cys-104. Residues Phe-297 to Asp-387 enclose the Ig-like C2-type 3 domain. The cysteines at positions 313 and 380 are disulfide-linked. The helical transmembrane segment at Ile-417–Ile-437 threads the bilayer. Residues Arg-438–Val-887 are Cytoplasmic-facing. The Protein kinase domain occupies Leu-585–Leu-862. Residues Ile-591–Val-599 and Lys-619 contribute to the ATP site. The Proton acceptor role is filled by Asp-728. Tyr-757 is subject to Phosphotyrosine; by autocatalysis.

Belongs to the protein kinase superfamily. Tyr protein kinase family. Fibroblast growth factor receptor subfamily. Expressed in brain, stem cells and the mesenchymal cells.

It localises to the membrane. It catalyses the reaction L-tyrosyl-[protein] + ATP = O-phospho-L-tyrosyl-[protein] + ADP + H(+). Functionally, receptor for basic fibroblast growth factor. The chain is Fibroblast growth factor receptor 2 (FGFR2) from Dugesia japonica (Planarian).